Reading from the N-terminus, the 487-residue chain is UDP-N-acetylmuramate--L-alanine ligase (487 aa).

126 to 132 (GTHGKTT) provides a ligand contact to ATP.

This sequence belongs to the MurCDEF family.

The protein localises to the cytoplasm. It catalyses the reaction UDP-N-acetyl-alpha-D-muramate + L-alanine + ATP = UDP-N-acetyl-alpha-D-muramoyl-L-alanine + ADP + phosphate + H(+). Its pathway is cell wall biogenesis; peptidoglycan biosynthesis. Cell wall formation. The chain is UDP-N-acetylmuramate--L-alanine ligase from Proteus mirabilis (strain HI4320).